The chain runs to 417 residues: MLEQMGIAAKQASYKLAQLSSREKNRVLEKIADELEAQSESILNANAQDVADARANGLSDAMLDRLALTPARLKGIADDVRQVCNLADPVGQVIDGGVLDSGLRLERRRVPLGVIGVIYEARPNVTVDVASLCLKTGNAVILRGGKETCRTNAATVAVIQDALNSCGLPAGAVQAIDNPDRALVSELLRMDKYIDMLIPRGGAGLHKLCREQSTIPVITGGIGVCHIYVDESAEIAEALKVIVNAKTQRPSTCNTVETLLVNKNIADSFLPALSKQMAESGVTLHADAGALAQLQTGPAKVVAVKAEEYDDEFLSLDLNVKIVSDLDDAIAHIREHGTQHSDAILTRDMRNAQRFVNEVDSSAVYVNASTRFTDGGQFGLGAEVAVSTQKLHARGPMGLEALTTYKWIGIGDYTIRA.

This sequence belongs to the gamma-glutamyl phosphate reductase family.

It localises to the cytoplasm. The enzyme catalyses L-glutamate 5-semialdehyde + phosphate + NADP(+) = L-glutamyl 5-phosphate + NADPH + H(+). Its pathway is amino-acid biosynthesis; L-proline biosynthesis; L-glutamate 5-semialdehyde from L-glutamate: step 2/2. In terms of biological role, catalyzes the NADPH-dependent reduction of L-glutamate 5-phosphate into L-glutamate 5-semialdehyde and phosphate. The product spontaneously undergoes cyclization to form 1-pyrroline-5-carboxylate. The polypeptide is Gamma-glutamyl phosphate reductase (Escherichia fergusonii (strain ATCC 35469 / DSM 13698 / CCUG 18766 / IAM 14443 / JCM 21226 / LMG 7866 / NBRC 102419 / NCTC 12128 / CDC 0568-73)).